The sequence spans 161 residues: Phosphopantetheine adenylyltransferase (161 aa).

Ser11 serves as a coordination point for substrate. Residues 11-12 and His19 contribute to the ATP site; that span reads SF. Substrate is bound by residues Lys43, Leu75, and Arg89. ATP contacts are provided by residues 90–92, Glu100, and 125–131; these read GLR and YSYLSSS.

The protein belongs to the bacterial CoaD family. As to quaternary structure, homohexamer. Requires Mg(2+) as cofactor.

The protein resides in the cytoplasm. It catalyses the reaction (R)-4'-phosphopantetheine + ATP + H(+) = 3'-dephospho-CoA + diphosphate. It participates in cofactor biosynthesis; coenzyme A biosynthesis; CoA from (R)-pantothenate: step 4/5. Functionally, reversibly transfers an adenylyl group from ATP to 4'-phosphopantetheine, yielding dephospho-CoA (dPCoA) and pyrophosphate. This Geobacter sp. (strain M21) protein is Phosphopantetheine adenylyltransferase.